The primary structure comprises 414 residues: NADH-ubiquinone oxidoreductase chain 4 (414 aa).

The next 10 helical transmembrane spans lie at 18–38, 47–67, 96–116, 126–146, 160–180, 188–208, 216–236, 254–274, 293–313, and 375–395; these read LVQL…MIGV, IAAF…LMSI, IIFI…PLHL, PTAG…YGYI, YFPI…IATL, IVAY…FSGV, IILM…IGVI, MMPI…AFPI, IIIA…SFWL, and VNIF…IVGM.

The protein belongs to the complex I subunit 4 family.

Its subcellular location is the mitochondrion membrane. The catalysed reaction is a ubiquinone + NADH + 5 H(+)(in) = a ubiquinol + NAD(+) + 4 H(+)(out). In terms of biological role, core subunit of the mitochondrial membrane respiratory chain NADH dehydrogenase (Complex I) that is believed to belong to the minimal assembly required for catalysis. Complex I functions in the transfer of electrons from NADH to the respiratory chain. The immediate electron acceptor for the enzyme is believed to be ubiquinone. This chain is NADH-ubiquinone oxidoreductase chain 4 (nad4), found in Dictyostelium citrinum (Slime mold).